Here is a 134-residue protein sequence, read N- to C-terminus: Transmembrane protein 100 (134 aa).

Residues 1–23 (MTEESTKENLGAPKSPTPVTMEK) are disordered. Serine 15 carries the phosphoserine modification. 2 helical membrane passes run 56-76 (CIIP…AVAY) and 84-104 (IISI…ASSA). Serine 121 carries the post-translational modification Phosphoserine.

Interacts (via C-terminus) with TRPA1 and TRPV1. Interacts with TASOR. In terms of tissue distribution, expressed in dorsal root ganglia. Expressed in neurons as well as nerve fiber bundles connecting ganglia and fibers innervating muscle layer of the gastric body, jejunum, and proximal colon. Expressed in arterial endothelial cells and neurons of the central nervous system and peripheral nervous system (at protein level). Expressed strongly in lung, weakly in brain, heart and muscle. Expressed in enteric neurons and vascular tissue in the muscularis propria of the gastrointestinal tract.

The protein resides in the cell membrane. It is found in the membrane. It localises to the perikaryon. The protein localises to the cytoplasm. Its subcellular location is the perinuclear region. The protein resides in the endoplasmic reticulum. Plays a role during embryonic arterial endothelium differentiation and vascular morphogenesis through the ACVRL1 receptor-dependent signaling pathway upon stimulation by bone morphogenetic proteins, such as GDF2/BMP9 and BMP10. Involved in the regulation of nociception, acting as a modulator of the interaction between TRPA1 and TRPV1, two molecular sensors and mediators of pain signals in dorsal root ganglia (DRG) neurons. Mechanistically, it weakens their interaction, thereby releasing the inhibition of TRPA1 by TRPV1 and increasing the single-channel open probability of the TRPA1-TRPV1 complex. In Mus musculus (Mouse), this protein is Transmembrane protein 100 (Tmem100).